Consider the following 65-residue polypeptide: Small ribosomal subunit protein eS27 (65 aa).

Zn(2+) contacts are provided by Cys20, Cys23, Cys39, and Cys42. A C4-type zinc finger spans residues 20-42; it reads CIDCGNEQIVFSNPATTVRCLVC.

Belongs to the eukaryotic ribosomal protein eS27 family. As to quaternary structure, part of the 30S ribosomal subunit. It depends on Zn(2+) as a cofactor.

This chain is Small ribosomal subunit protein eS27, found in Thermococcus onnurineus (strain NA1).